We begin with the raw amino-acid sequence, 506 residues long: MKKAEMGRFSISPDEDSSSYSSNSDFNYSYPTKQAALKSHYADVDPENQNFLLESNLGKKKYETEFHPGTTSFGMSVFNLSNAIVGSGILGLSYAMANTGIALFIILLTFVSIFSLYSVHLLLKTANEGGSLLYEQLGYKAFGLVGKLAASGSITMQNIGAMSSYLFIVKYELPLVIQALTNIEDKTGLWYLNGNYLVLLVSLVVILPLSLFRNLGYLGYTSGLSLLCMVFFLIVVICKKFQVPCPVEAALIINETINTTLTQPTALVPALSHNVTENDSCRPHYFIFNSQTVYAVPILIFSFVCHPAVLPIYEELKDRSRRRMMNVSKISFFAMFLMYLLAALFGYLTFYEHVESELLHTYSSILGTDILLLIVRLAVLMAVTLTVPVVIFPIRSSVTHLLCASKDFSWWRHSLITVSILAFTNLLVIFVPTIRDIFGFIGASAASMLIFILPSAFYIKLVKKEPMKSVQKIGALFFLLSGVLVMTGSMALIVLDWVHNAPGGGH.

The interval 1–23 (MKKAEMGRFSISPDEDSSSYSSN) is disordered. Over 1 to 76 (MKKAEMGRFS…HPGTTSFGMS (76 aa)) the chain is Cytoplasmic. The tract at residues 1–96 (MKKAEMGRFS…SGILGLSYAM (96 aa)) is regulates protein turnover upon amino acid deprivation. Phosphoserine is present on residues Ser-10, Ser-12, Ser-21, Ser-22, and Ser-55. The chain crosses the membrane as a helical span at residues 77 to 96 (VFNLSNAIVGSGILGLSYAM). Asn-82 is a Na(+) binding site. Residues 97–102 (ANTGIA) are Extracellular-facing. The helical transmembrane segment at 103–123 (LFIILLTFVSIFSLYSVHLLL) threads the bilayer. The Cytoplasmic segment spans residues 124–158 (KTANEGGSLLYEQLGYKAFGLVGKLAASGSITMQN). A helical membrane pass occupies residues 159 to 177 (IGAMSSYLFIVKYELPLVI). The Extracellular portion of the chain corresponds to 178–188 (QALTNIEDKTG). Residues 189 to 209 (LWYLNGNYLVLLVSLVVILPL) form a helical membrane-spanning segment. The Cytoplasmic segment spans residues 210-217 (SLFRNLGY). A helical membrane pass occupies residues 218-238 (LGYTSGLSLLCMVFFLIVVIC). Residues 239-292 (KKFQVPCPVEAALIINETINTTLTQPTALVPALSHNVTENDSCRPHYFIFNSQT) lie on the Extracellular side of the membrane. Cys-245 and Cys-281 form a disulfide bridge. N-linked (GlcNAc...) asparagine glycans are attached at residues Asn-258 and Asn-274. Residues 293–313 (VYAVPILIFSFVCHPAVLPIY) form a helical membrane-spanning segment. Topologically, residues 314–329 (EELKDRSRRRMMNVSK) are cytoplasmic. The helical transmembrane segment at 330–350 (ISFFAMFLMYLLAALFGYLTF) threads the bilayer. At 351–371 (YEHVESELLHTYSSILGTDIL) the chain is on the extracellular side. A helical membrane pass occupies residues 372-392 (LLIVRLAVLMAVTLTVPVVIF). Thr-386 is a binding site for Na(+). At 393-413 (PIRSSVTHLLCASKDFSWWRH) the chain is on the cytoplasmic side. Residues 414 to 434 (SLITVSILAFTNLLVIFVPTI) traverse the membrane as a helical segment. Residues 435-436 (RD) are Extracellular-facing. A helical transmembrane segment spans residues 437–457 (IFGFIGASAASMLIFILPSAF). At 458-472 (YIKLVKKEPMKSVQK) the chain is on the cytoplasmic side. A helical membrane pass occupies residues 473 to 495 (IGALFFLLSGVLVMTGSMALIVL). Over 496 to 506 (DWVHNAPGGGH) the chain is Extracellular.

Belongs to the amino acid/polyamine transporter 2 family. Polyubiquitination by NEDD4L regulates the degradation and the activity of SLC38A2. As to expression, ubiquitously expressed. Expressed in neocortex. Widely expressed in the central nervous system with higher concentrations in caudal regions. Expressed by glutamatergic and GABAergic neurons together with astrocytes and other non-neuronal cells in the cerebral cortex (at protein level).

The protein localises to the cell membrane. It catalyses the reaction L-alanine(in) + Na(+)(in) = L-alanine(out) + Na(+)(out). The catalysed reaction is glycine(in) + Na(+)(in) = glycine(out) + Na(+)(out). It carries out the reaction L-serine(in) + Na(+)(in) = L-serine(out) + Na(+)(out). The enzyme catalyses L-proline(in) + Na(+)(in) = L-proline(out) + Na(+)(out). It catalyses the reaction L-methionine(in) + Na(+)(in) = L-methionine(out) + Na(+)(out). The catalysed reaction is L-histidine(in) + Na(+)(in) = L-histidine(out) + Na(+)(out). It carries out the reaction L-asparagine(in) + Na(+)(in) = L-asparagine(out) + Na(+)(out). The enzyme catalyses L-glutamine(in) + Na(+)(in) = L-glutamine(out) + Na(+)(out). It catalyses the reaction L-threonine(in) + Na(+)(in) = L-threonine(out) + Na(+)(out). The catalysed reaction is L-leucine(in) + Na(+)(in) = L-leucine(out) + Na(+)(out). It carries out the reaction L-phenylalanine(in) + Na(+)(in) = L-phenylalanine(out) + Na(+)(out). Its activity is regulated as follows. Inhibited by N-methyl-D-glucamine. Inhibited by choline. Allosteric regulation of sodium ions binding by pH. Symporter that cotransports neutral amino acids and sodium ions from the extracellular to the intracellular side of the cell membrane. The transport is pH-sensitive, Li(+)-intolerant, electrogenic, driven by the Na(+) electrochemical gradient and cotransports of neutral amino acids and sodium ions with a stoichiometry of 1:1. May function in the transport of amino acids at the blood-brain barrier. May function in the transport of amino acids in the supply of maternal nutrients to the fetus through the placenta. Maintains a key metabolic glutamine/glutamate balance underpinning retrograde signaling by dendritic release of the neurotransmitter glutamate. Transports L-proline in differentiating osteoblasts for the efficient synthesis of proline-enriched proteins and provides proline essential for osteoblast differentiation and bone formation during bone development. The protein is Sodium-coupled neutral amino acid symporter 2 of Homo sapiens (Human).